The following is a 213-amino-acid chain: Proton-translocating ferredoxin:NAD(+) oxidoreductase complex subunit E (213 aa).

A run of 6 helical transmembrane segments spans residues 11-31 (GLIA…ALAT), 39-59 (FTMG…VSII), 69-89 (VPVY…VMQA), 93-113 (LLYK…IILA), 128-148 (FFDG…IGMI), and 170-190 (ALIM…VAIV).

Belongs to the NqrDE/RnfAE family. As to quaternary structure, the complex is composed of six subunits: RnfA, RnfB, RnfC, RnfD, RnfE and RnfG.

Its subcellular location is the cell membrane. Functionally, part of a membrane-bound complex that couples electron transfer with translocation of ions across the membrane. Couples electron transfer from reduced ferredoxin to NAD(+) with translocation of H(+) out of the cell. Essential for energy conservation during autotrophic growth. Contributes to ATP synthesis during heterotrophic growth. The polypeptide is Proton-translocating ferredoxin:NAD(+) oxidoreductase complex subunit E (Clostridium ljungdahlii (strain ATCC 55383 / DSM 13528 / PETC)).